A 215-amino-acid chain; its full sequence is Peroxiredoxin 1 (215 aa).

The region spanning 2–157 (KLLGEKFPSM…ILRALKALQT (156 aa)) is the Thioredoxin domain. C44 acts as the Cysteine sulfenic acid (-SOH) intermediate in catalysis. R120 lines the substrate pocket.

The protein belongs to the peroxiredoxin family. Prx6 subfamily. In terms of assembly, homodecamer. Pentamer of dimers that assemble into a ring structure.

The protein resides in the cytoplasm. The catalysed reaction is a hydroperoxide + [thioredoxin]-dithiol = an alcohol + [thioredoxin]-disulfide + H2O. Thiol-specific peroxidase that catalyzes the reduction of hydrogen peroxide and organic hydroperoxides to water and alcohols, respectively. Plays a role in cell protection against oxidative stress by detoxifying peroxides. The chain is Peroxiredoxin 1 from Caldanaerobacter subterraneus subsp. tengcongensis (strain DSM 15242 / JCM 11007 / NBRC 100824 / MB4) (Thermoanaerobacter tengcongensis).